The primary structure comprises 369 residues: Sulfate permease 2, chloroplastic (369 aa).

A disordered region spans residues 1–21; sequence MASTTLLQPALGLPSRVGPRS. Residues 1–82 constitute a chloroplast transit peptide; it reads MASTTLLQPA…QQSRGDLLVS (82 aa). 5 helical membrane-spanning segments follow: residues 110–130, 156–176, 187–207, 229–249, and 335–355; these read VGVA…NVFV, TLML…VAAI, VFLM…TGLM, VVFA…PFVV, and TEAA…TLWI. One can recognise an ABC transmembrane type-1 domain in the interval 153–356; the sequence is LKMTLMLAFV…ALALGTLWIK (204 aa).

Belongs to the ATP-binding cassette (ABC) (TC 3.A.1) superfamily. In terms of assembly, part of the chloroplast sulfate permease holocomplex. May form a heterodimer with SLUP1.

It localises to the plastid. Its subcellular location is the chloroplast membrane. Its function is as follows. Part of the ABC-type chloroplast envelope-localized sulfate transporter. The sequence is that of Sulfate permease 2, chloroplastic (SULP2) from Chlamydomonas reinhardtii (Chlamydomonas smithii).